The chain runs to 314 residues: Aspartate carbamoyltransferase catalytic subunit (314 aa).

Residues Arg55 and Thr56 each coordinate carbamoyl phosphate. Lys83 provides a ligand contact to L-aspartate. Carbamoyl phosphate is bound by residues Arg105, His134, and Gln137. Residues Arg167 and Arg221 each coordinate L-aspartate. Carbamoyl phosphate is bound by residues Gly262 and Pro263.

The protein belongs to the aspartate/ornithine carbamoyltransferase superfamily. ATCase family. As to quaternary structure, heterododecamer (2C3:3R2) of six catalytic PyrB chains organized as two trimers (C3), and six regulatory PyrI chains organized as three dimers (R2).

It carries out the reaction carbamoyl phosphate + L-aspartate = N-carbamoyl-L-aspartate + phosphate + H(+). It functions in the pathway pyrimidine metabolism; UMP biosynthesis via de novo pathway; (S)-dihydroorotate from bicarbonate: step 2/3. Its function is as follows. Catalyzes the condensation of carbamoyl phosphate and aspartate to form carbamoyl aspartate and inorganic phosphate, the committed step in the de novo pyrimidine nucleotide biosynthesis pathway. The sequence is that of Aspartate carbamoyltransferase catalytic subunit from Corynebacterium urealyticum (strain ATCC 43042 / DSM 7109).